Here is a 123-residue protein sequence, read N- to C-terminus: Large ribosomal subunit protein uL14 (123 aa).

This sequence belongs to the universal ribosomal protein uL14 family. In terms of assembly, part of the 50S ribosomal subunit. Forms a cluster with proteins L3 and L19. In the 70S ribosome, L14 and L19 interact and together make contacts with the 16S rRNA in bridges B5 and B8.

Functionally, binds to 23S rRNA. Forms part of two intersubunit bridges in the 70S ribosome. The protein is Large ribosomal subunit protein uL14 of Aliivibrio salmonicida (strain LFI1238) (Vibrio salmonicida (strain LFI1238)).